Reading from the N-terminus, the 95-residue chain is Aspartyl/glutamyl-tRNA(Asn/Gln) amidotransferase subunit C (95 aa).

Belongs to the GatC family. Heterotrimer of A, B and C subunits.

The enzyme catalyses L-glutamyl-tRNA(Gln) + L-glutamine + ATP + H2O = L-glutaminyl-tRNA(Gln) + L-glutamate + ADP + phosphate + H(+). The catalysed reaction is L-aspartyl-tRNA(Asn) + L-glutamine + ATP + H2O = L-asparaginyl-tRNA(Asn) + L-glutamate + ADP + phosphate + 2 H(+). Allows the formation of correctly charged Asn-tRNA(Asn) or Gln-tRNA(Gln) through the transamidation of misacylated Asp-tRNA(Asn) or Glu-tRNA(Gln) in organisms which lack either or both of asparaginyl-tRNA or glutaminyl-tRNA synthetases. The reaction takes place in the presence of glutamine and ATP through an activated phospho-Asp-tRNA(Asn) or phospho-Glu-tRNA(Gln). This Rhizobium etli (strain CIAT 652) protein is Aspartyl/glutamyl-tRNA(Asn/Gln) amidotransferase subunit C.